The primary structure comprises 907 residues: Protein translocase subunit SecA (907 aa).

ATP-binding positions include Q87, 105-109, and D511; that span reads GEGKT. Zn(2+) contacts are provided by C891, C893, C902, and H903.

Belongs to the SecA family. In terms of assembly, monomer and homodimer. Part of the essential Sec protein translocation apparatus which comprises SecA, SecYEG and auxiliary proteins SecDF-YajC and YidC. It depends on Zn(2+) as a cofactor.

It is found in the cell inner membrane. Its subcellular location is the cytoplasm. It catalyses the reaction ATP + H2O + cellular proteinSide 1 = ADP + phosphate + cellular proteinSide 2.. Its function is as follows. Part of the Sec protein translocase complex. Interacts with the SecYEG preprotein conducting channel. Has a central role in coupling the hydrolysis of ATP to the transfer of proteins into and across the cell membrane, serving both as a receptor for the preprotein-SecB complex and as an ATP-driven molecular motor driving the stepwise translocation of polypeptide chains across the membrane. This Aromatoleum aromaticum (strain DSM 19018 / LMG 30748 / EbN1) (Azoarcus sp. (strain EbN1)) protein is Protein translocase subunit SecA.